Reading from the N-terminus, the 166-residue chain is Large ribosomal subunit protein mL49 (166 aa).

A disordered region spans residues 56-78; sequence RIPDPPKHEHYPTPSGWQPPRDP.

Belongs to the mitochondrion-specific ribosomal protein mL49 family. Interacts with OXA1L.

Its subcellular location is the mitochondrion. The chain is Large ribosomal subunit protein mL49 (MRPL49) from Macaca fascicularis (Crab-eating macaque).